The chain runs to 633 residues: Shootin-1 (633 aa).

Met-1 carries the post-translational modification N-acetylmethionine. 2 positions are modified to phosphoserine: Ser-3 and Ser-4. Positions 7-353 form a coiled coil; it reads EKQLQLITSL…RVNQSENSVP (347 aa). Ser-101 and Ser-249 each carry phosphoserine; by PAK1. The tract at residues 343–508 is disordered; that stretch reads KRVNQSENSV…LATSESKSMP (166 aa). Residues 352 to 369 show a composition bias toward pro residues; sequence VPPPPPPPPPLPPPPPNP. Ser-375 carries the phosphoserine modification. Basic and acidic residues predominate over residues 403–418; sequence TDLKRQAVEEMMDRIK. Residues 456-465 are compositionally biased toward polar residues; sequence LNKSTSSRSL. Ser-473 carries the phosphoserine modification. The residue at position 487 (Thr-487) is a Phosphothreonine. A compositionally biased stretch (polar residues) spans 490–505; it reads ADSSSPTGILATSESK. Ser-494 is modified (phosphoserine). Residue Thr-496 is modified to Phosphothreonine. Phosphoserine occurs at positions 506 and 515. Residues 525 to 633 are disordered; it reads TLEAEFNNPC…KTGETDSSNC (109 aa). Thr-537 bears the Phosphothreonine mark. Residues 550 to 559 show a composition bias toward polar residues; the sequence is CTNSKVTFQP. Basic and acidic residues predominate over residues 590–621; sequence PQTKDQAAEKDPTQCKEEERGETQPEFKEDSS.

The protein belongs to the shootin family. In terms of assembly, interacts with PFN2. Interacts (via N-terminus) with KIF20B; this interaction is direct and promotes the association of SHTN1 to microtubules in primary neurons. Associates with microtubule. Interacts with L1CAM; this interaction occurs in axonal growth cones. Interacts with actin filament retrograde flow; this interaction is enhanced in a netrin-1- and PAK1-dependent manner and promotes F-actin-substrate coupling and concomitant formation of traction forces at axonal growth cones. Interacts with RUFY3. Phosphorylated on Ser-101 and Ser-249 by PAK1 through a CDC42- and RAC1-dependent signaling pathway, which enhances its association with F-actin retrograde flow in filopodia and lamellipodia of axonal growth cones. Phosphorylation on Ser-101 and Ser-249 is increased by netrin-1. Brain-specific (at protein level). Expressed in hippocampal neurons.

The protein localises to the perikaryon. Its subcellular location is the cell projection. It is found in the axon. It localises to the growth cone. The protein resides in the cytoplasm. The protein localises to the cytoskeleton. Its subcellular location is the filopodium. It is found in the lamellipodium. Involved in the generation of internal asymmetric signals required for neuronal polarization and neurite outgrowth. Mediates netrin-1-induced F-actin-substrate coupling or 'clutch engagement' within the axon growth cone through activation of CDC42, RAC1 and PAK1-dependent signaling pathway, thereby converting the F-actin retrograde flow into traction forces, concomitantly with filopodium extension and axon outgrowth. Plays a role in cytoskeletal organization by regulating the subcellular localization of phosphoinositide 3-kinase (PI3K) activity at the axonal growth cone. Also plays a role in regenerative neurite outgrowth. In the developing cortex, cooperates with KIF20B to promote both the transition from the multipolar to the bipolar stage and the radial migration of cortical neurons from the ventricular zone toward the superficial layer of the neocortex. Involved in the accumulation of phosphatidylinositol 3,4,5-trisphosphate (PIP3) in the growth cone of primary hippocampal neurons. This Rattus norvegicus (Rat) protein is Shootin-1.